The sequence spans 423 residues: Mannan endo-1,4-beta-mannosidase (423 aa).

The first 27 residues, 1-27 (MKTITTARLPWAAQSFALGICLIALLG), serve as a signal peptide directing secretion. Residues 56-409 (METRSLFAFM…YADEFTAFNR (354 aa)) form the GH26 domain. 3 residues coordinate substrate: E121, H143, and W162. Catalysis depends on E212, which acts as the Proton donor. 2 residues coordinate substrate: W217 and Y285. The Nucleophile role is filled by E320. Residues 360 to 361 (WR) and H377 each bind substrate.

The protein belongs to the glycosyl hydrolase 26 family. Homodimer.

The catalysed reaction is Random hydrolysis of (1-&gt;4)-beta-D-mannosidic linkages in mannans, galactomannans and glucomannans.. Functionally, catalyzes the endo hydrolysis of beta-1,4-linked mannan and galactomannan, but displays little activity towards other polysaccharides located in the plant cell wall. Preferentially hydrolyzes the larger oligosaccharides and has greater activity against non-substituted polysaccharides. It displays tight specificity for mannose at both the -2 and the -1 subsites. Appears to act in synergy with alpha-galactosidase (AgaA) to elicit hydrolysis of galactomannan. The protein is Mannan endo-1,4-beta-mannosidase of Cellvibrio japonicus (strain Ueda107) (Pseudomonas fluorescens subsp. cellulosa).